Consider the following 453-residue polypeptide: MSIVTVQLGQCGNQIGFEVFDALLSDSHSSQGLCSMRENEAYQASCKERFFSEEENGVPIARAVLVDMEPKVINQMLSKAAQSGQWKYGQHACFCQKQGSGNNWAYGYSVHGPRHEESIMNIIRKEVEKCDSFSGFFIIMSMAGGTGSGLGAFVTQNLEDQYSNSLKMNQIIWPYGTGEVIVQNYNSILTLSHLYRSSDALLLHENDAIHKICAKLMNIKQISFSDINQVLAHQLGSVFQPTYSAESSFHYRRNPLGDLMEHLVPHPEFKMLSVRNIPHMSENSLAYTTFTWAGLLKHLRQMLISNAKMEEGIDRHVWPPLSGLPPLSKMSLNKDLHFNTSIANLVILRGKDVQSADVEGFKDPALYTSWLKPVNAFNVWKTQRAFSKYEKSAVLVSNSQFLVKPLDMIVGKAWNMFASKAYIHQYTKFGIEEEDFLDSFTSLEQVVASYCNL.

143-149 (AGGTGSG) serves as a coordination point for GTP.

Belongs to the tubulin family. In terms of assembly, found in a complex with TEDC1, TEDC2, TUBE1 and TUBD1.

It is found in the nucleus. The protein resides in the cytoplasm. It localises to the cytoskeleton. Its subcellular location is the microtubule organizing center. The protein localises to the centrosome. It is found in the centriole. The protein resides in the cell projection. It localises to the cilium. Acts as a positive regulator of hedgehog signaling and regulates ciliary function. The chain is Tubulin delta chain (TUBD1) from Homo sapiens (Human).